The sequence spans 257 residues: Phycoerythrobilin:ferredoxin oxidoreductase (257 aa).

It belongs to the HY2 family.

The enzyme catalyses (3Z)-phycoerythrobilin + oxidized 2[4Fe-4S]-[ferredoxin] = 15,16-dihydrobiliverdin + reduced 2[4Fe-4S]-[ferredoxin] + 2 H(+). Functionally, catalyzes the two-electron reduction of the C2 and C3(1) diene system of 15,16-dihydrobiliverdin. This chain is Phycoerythrobilin:ferredoxin oxidoreductase (pebB), found in Prochlorococcus marinus subsp. pastoris (strain CCMP1986 / NIES-2087 / MED4).